Reading from the N-terminus, the 496-residue chain is Probable cytosol aminopeptidase (496 aa).

Mn(2+)-binding residues include lysine 268 and aspartate 273. Lysine 280 is an active-site residue. Mn(2+) contacts are provided by aspartate 291, aspartate 350, and glutamate 352. The active site involves arginine 354.

This sequence belongs to the peptidase M17 family. Mn(2+) is required as a cofactor.

The protein localises to the cytoplasm. It catalyses the reaction Release of an N-terminal amino acid, Xaa-|-Yaa-, in which Xaa is preferably Leu, but may be other amino acids including Pro although not Arg or Lys, and Yaa may be Pro. Amino acid amides and methyl esters are also readily hydrolyzed, but rates on arylamides are exceedingly low.. The enzyme catalyses Release of an N-terminal amino acid, preferentially leucine, but not glutamic or aspartic acids.. In terms of biological role, presumably involved in the processing and regular turnover of intracellular proteins. Catalyzes the removal of unsubstituted N-terminal amino acids from various peptides. The polypeptide is Probable cytosol aminopeptidase (Thioalkalivibrio sulfidiphilus (strain HL-EbGR7)).